The chain runs to 823 residues: Lon protease (823 aa).

The region spanning Ile51 to Tyr246 is the Lon N-terminal domain. Gly397–Thr404 contacts ATP. The Lon proteolytic domain maps to Asn633–Arg815. Active-site residues include Ser721 and Lys764.

The protein belongs to the peptidase S16 family. In terms of assembly, homohexamer. Organized in a ring with a central cavity.

It localises to the cytoplasm. The catalysed reaction is Hydrolysis of proteins in presence of ATP.. In terms of biological role, ATP-dependent serine protease that mediates the selective degradation of mutant and abnormal proteins as well as certain short-lived regulatory proteins. Required for cellular homeostasis and for survival from DNA damage and developmental changes induced by stress. Degrades polypeptides processively to yield small peptide fragments that are 5 to 10 amino acids long. Binds to DNA in a double-stranded, site-specific manner. This chain is Lon protease, found in Parabacteroides distasonis (strain ATCC 8503 / DSM 20701 / CIP 104284 / JCM 5825 / NCTC 11152).